The sequence spans 350 residues: Phenylalanine--tRNA ligase alpha subunit (350 aa).

Glutamate 257 provides a ligand contact to Mg(2+).

Belongs to the class-II aminoacyl-tRNA synthetase family. Phe-tRNA synthetase alpha subunit type 1 subfamily. As to quaternary structure, tetramer of two alpha and two beta subunits. The cofactor is Mg(2+).

It is found in the cytoplasm. The enzyme catalyses tRNA(Phe) + L-phenylalanine + ATP = L-phenylalanyl-tRNA(Phe) + AMP + diphosphate + H(+). This Listeria monocytogenes serotype 4b (strain CLIP80459) protein is Phenylalanine--tRNA ligase alpha subunit.